The sequence spans 97 residues: Large ribosomal subunit protein bL27 (97 aa).

Residues 1 to 12 (MLKMNLANLQLF) constitute a propeptide that is removed on maturation. Residues 14–37 (HKKGGGSTSNGRDSQAKRLGAKAA) are disordered.

It belongs to the bacterial ribosomal protein bL27 family. Post-translationally, the N-terminus is cleaved by ribosomal processing cysteine protease Prp.

This is Large ribosomal subunit protein bL27 from Streptococcus gordonii (strain Challis / ATCC 35105 / BCRC 15272 / CH1 / DL1 / V288).